Consider the following 208-residue polypeptide: Protein-L-isoaspartate O-methyltransferase (208 aa).

Ser-59 is a catalytic residue.

Belongs to the methyltransferase superfamily. L-isoaspartyl/D-aspartyl protein methyltransferase family.

The protein resides in the cytoplasm. The catalysed reaction is [protein]-L-isoaspartate + S-adenosyl-L-methionine = [protein]-L-isoaspartate alpha-methyl ester + S-adenosyl-L-homocysteine. Functionally, catalyzes the methyl esterification of L-isoaspartyl residues in peptides and proteins that result from spontaneous decomposition of normal L-aspartyl and L-asparaginyl residues. It plays a role in the repair and/or degradation of damaged proteins. The protein is Protein-L-isoaspartate O-methyltransferase of Vibrio parahaemolyticus serotype O3:K6 (strain RIMD 2210633).